The chain runs to 389 residues: Serpentine receptor class alpha/beta-14 (389 aa).

The Extracellular portion of the chain corresponds to 1–45 (MPSDDFVKTARKALISHSVSIQNYTEDDCQIAFHATTNSFMQTIR). Asn-23 carries N-linked (GlcNAc...) asparagine glycosylation. Residues 46–66 (LVHIFFCTFGAISSSLFIYVL) traverse the membrane as a helical segment. The Cytoplasmic segment spans residues 67 to 81 (LNSSSRNLHRNLRIS). The helical transmembrane segment at 82–102 (LASLAFAALIACLQLDFIAFY) threads the bilayer. Over 103–123 (HLALTLTADNACDSMYEARKC) the chain is Extracellular. A disulfide bond links Cys-123 and Cys-198. The chain crosses the membrane as a helical span at residues 124-144 (AILRFPVVLSIYATLCGIIVL). At 145–167 (AIERTIATLKYKTYEANGSRVVG) the chain is on the cytoplasmic side. Residues 168 to 188 (LVLVTGQWFVCIIVAVFSVLL) traverse the membrane as a helical segment. The Extracellular segment spans residues 189 to 208 (RSDPGYVHYCTAYVSHPRTS). The helical transmembrane segment at 209-229 (VFSLCFMSALEVATLVYFVLL) threads the bilayer. Over 230-268 (LQSNQRRQVNEFVNKAMHSLSERYQLQENVRIMKILIPS) the chain is Cytoplasmic. Residues 269–289 (ITVHAILGFIGLGSMLAFAII) traverse the membrane as a helical segment. Residues 290-303 (YRYADERLIVGFAP) are Extracellular-facing. The chain crosses the membrane as a helical span at residues 304 to 324 (FSEVVLLVIPIYAVVFPIVAV). Topologically, residues 325-389 (VQNKQLRLAS…FDLLNEMWKK (65 aa)) are cytoplasmic.

This sequence belongs to the nematode receptor-like protein srab family.

It is found in the membrane. The polypeptide is Serpentine receptor class alpha/beta-14 (Caenorhabditis elegans).